A 152-amino-acid polypeptide reads, in one-letter code: Protein-export protein SecB (152 aa).

Belongs to the SecB family. In terms of assembly, homotetramer, a dimer of dimers. One homotetramer interacts with 1 SecA dimer.

It is found in the cytoplasm. In terms of biological role, one of the proteins required for the normal export of preproteins out of the cell cytoplasm. It is a molecular chaperone that binds to a subset of precursor proteins, maintaining them in a translocation-competent state. It also specifically binds to its receptor SecA. This is Protein-export protein SecB from Rickettsia massiliae (strain Mtu5).